A 234-amino-acid polypeptide reads, in one-letter code: Potassium/proton antiporter CemA (234 aa).

Helical transmembrane passes span I8–L28, T117–L137, I157–I177, and I193–W213.

Belongs to the CemA family.

It localises to the plastid. The protein resides in the chloroplast inner membrane. The catalysed reaction is K(+)(in) + H(+)(out) = K(+)(out) + H(+)(in). Its function is as follows. Contributes to K(+)/H(+) antiport activity by supporting proton efflux to control proton extrusion and homeostasis in chloroplasts in a light-dependent manner to modulate photosynthesis. Prevents excessive induction of non-photochemical quenching (NPQ) under continuous-light conditions. Indirectly promotes efficient inorganic carbon uptake into chloroplasts. In Citrus sinensis (Sweet orange), this protein is Potassium/proton antiporter CemA.